A 427-amino-acid polypeptide reads, in one-letter code: Gamma-glutamyl phosphate reductase (427 aa).

It belongs to the gamma-glutamyl phosphate reductase family.

The protein localises to the cytoplasm. The catalysed reaction is L-glutamate 5-semialdehyde + phosphate + NADP(+) = L-glutamyl 5-phosphate + NADPH + H(+). It functions in the pathway amino-acid biosynthesis; L-proline biosynthesis; L-glutamate 5-semialdehyde from L-glutamate: step 2/2. Its function is as follows. Catalyzes the NADPH-dependent reduction of L-glutamate 5-phosphate into L-glutamate 5-semialdehyde and phosphate. The product spontaneously undergoes cyclization to form 1-pyrroline-5-carboxylate. This Sinorhizobium medicae (strain WSM419) (Ensifer medicae) protein is Gamma-glutamyl phosphate reductase.